The primary structure comprises 312 residues: Malate dehydrogenase (312 aa).

Residues 12–17 and D36 contribute to the NAD(+) site; that span reads GAGFTG. Substrate is bound by residues R87 and R93. Residues N100 and 123–125 each bind NAD(+); that span reads LTN. N125 serves as a coordination point for substrate. S149 carries the post-translational modification Phosphoserine. Residue R156 coordinates substrate. H180 (proton acceptor) is an active-site residue.

The protein belongs to the LDH/MDH superfamily. MDH type 3 family. In terms of assembly, homotetramer.

It catalyses the reaction (S)-malate + NAD(+) = oxaloacetate + NADH + H(+). In terms of biological role, catalyzes the reversible oxidation of malate to oxaloacetate. The protein is Malate dehydrogenase of Bacillus israeli.